We begin with the raw amino-acid sequence, 167 residues long: Ubiquitin-fold modifier-conjugating enzyme 1 (167 aa).

The Glycyl thioester intermediate role is filled by cysteine 116. A Glycyl lysine isopeptide (Lys-Gly) (interchain with G-Cter in UFM1) cross-link involves residue lysine 122.

This sequence belongs to the ubiquitin-conjugating enzyme family. UFC1 subfamily. As to quaternary structure, interacts with UBA5 (via C-terminus). Interacts with UFL1. Interacts with UFM1. Interacts with KIRREL3. Ufmylated at Lys-122. Deufmylated by UFSP1.

E2-like enzyme which specifically catalyzes the second step in ufmylation. Accepts the ubiquitin-like modifier UFM1 from the E1 enzyme UBA5 and forms an intermediate with UFM1 via a thioester linkage. Ufmylation is involved in various processes, such as ribosome recycling, response to DNA damage, interferon response or reticulophagy (also called ER-phagy). This chain is Ubiquitin-fold modifier-conjugating enzyme 1, found in Homo sapiens (Human).